We begin with the raw amino-acid sequence, 376 residues long: Chaperone protein DnaJ (376 aa).

Positions 5–70 constitute a J domain; that stretch reads DFYEVLGVGR…DKKAAYDQFG (66 aa). A CR-type zinc finger spans residues 132 to 210; that stretch reads GLTKELRIPT…CHGEGRVEKS (79 aa). 8 residues coordinate Zn(2+): C145, C148, C162, C165, C184, C187, C198, and C201. 4 CXXCXGXG motif repeats span residues 145–152, 162–169, 184–191, and 198–205; these read CDACDGSG, CGTCHGQG, CPTCHGRG, and CNKCHGEG.

Belongs to the DnaJ family. Homodimer. Zn(2+) is required as a cofactor.

The protein resides in the cytoplasm. Participates actively in the response to hyperosmotic and heat shock by preventing the aggregation of stress-denatured proteins and by disaggregating proteins, also in an autonomous, DnaK-independent fashion. Unfolded proteins bind initially to DnaJ; upon interaction with the DnaJ-bound protein, DnaK hydrolyzes its bound ATP, resulting in the formation of a stable complex. GrpE releases ADP from DnaK; ATP binding to DnaK triggers the release of the substrate protein, thus completing the reaction cycle. Several rounds of ATP-dependent interactions between DnaJ, DnaK and GrpE are required for fully efficient folding. Also involved, together with DnaK and GrpE, in the DNA replication of plasmids through activation of initiation proteins. The polypeptide is Chaperone protein DnaJ (Shewanella halifaxensis (strain HAW-EB4)).